The sequence spans 773 residues: Pentatricopeptide repeat-containing protein At1g76280 (773 aa).

PPR repeat units lie at residues 130 to 165 (DSRS…RISP), 166 to 200 (LLPI…RVGK), 201 to 231 (NGIT…YVNH), 235 to 269 (DILS…ALRG), 332 to 369 (LRWS…NLKP), 370 to 400 (YDST…ISEC), 402 to 436 (YSYP…KLRP), 524 to 558 (GTPT…GCPA), 559 to 593 (DVAT…GFSP), 594 to 628 (KAVT…EIHL), and 629 to 663 (DVLS…KVNP).

It belongs to the PPR family. P subfamily.

This chain is Pentatricopeptide repeat-containing protein At1g76280, found in Arabidopsis thaliana (Mouse-ear cress).